A 140-amino-acid polypeptide reads, in one-letter code: Probable glycine cleavage system H protein (140 aa).

The 93-residue stretch at 22–114 folds into the Lipoyl-binding domain; that stretch reads RAIIGITSYA…YEEGWIVVLE (93 aa). K63 bears the N6-lipoyllysine mark.

This sequence belongs to the GcvH family. As to quaternary structure, the glycine cleavage system is composed of four proteins: P, T, L and H. (R)-lipoate serves as cofactor.

In terms of biological role, the glycine cleavage system catalyzes the degradation of glycine. The H protein shuttles the methylamine group of glycine from the P protein to the T protein. The sequence is that of Probable glycine cleavage system H protein from Korarchaeum cryptofilum (strain OPF8).